A 427-amino-acid chain; its full sequence is Tol-Pal system protein TolB (427 aa).

An N-terminal signal peptide occupies residues 1-25; it reads MKTFAQLRLLLAAAALALLSFSAQA.

It belongs to the TolB family. The Tol-Pal system is composed of five core proteins: the inner membrane proteins TolA, TolQ and TolR, the periplasmic protein TolB and the outer membrane protein Pal. They form a network linking the inner and outer membranes and the peptidoglycan layer.

Its subcellular location is the periplasm. Functionally, part of the Tol-Pal system, which plays a role in outer membrane invagination during cell division and is important for maintaining outer membrane integrity. In Azoarcus sp. (strain BH72), this protein is Tol-Pal system protein TolB.